A 680-amino-acid polypeptide reads, in one-letter code: DNA-directed RNA polymerase subunit beta' (680 aa).

Cysteine 69, cysteine 71, cysteine 87, and cysteine 90 together coordinate Zn(2+). Residues aspartate 489, aspartate 491, and aspartate 493 each coordinate Mg(2+).

Belongs to the RNA polymerase beta' chain family. RpoC1 subfamily. In plastids the minimal PEP RNA polymerase catalytic core is composed of four subunits: alpha, beta, beta', and beta''. When a (nuclear-encoded) sigma factor is associated with the core the holoenzyme is formed, which can initiate transcription. The cofactor is Mg(2+). Zn(2+) is required as a cofactor.

The protein localises to the plastid. It is found in the chloroplast. The catalysed reaction is RNA(n) + a ribonucleoside 5'-triphosphate = RNA(n+1) + diphosphate. Its function is as follows. DNA-dependent RNA polymerase catalyzes the transcription of DNA into RNA using the four ribonucleoside triphosphates as substrates. This is DNA-directed RNA polymerase subunit beta' from Ranunculus macranthus (Large buttercup).